A 468-amino-acid polypeptide reads, in one-letter code: ATP synthase subunit beta (468 aa).

155–162 (GGAGVGKT) provides a ligand contact to ATP.

This sequence belongs to the ATPase alpha/beta chains family. In terms of assembly, F-type ATPases have 2 components, CF(1) - the catalytic core - and CF(0) - the membrane proton channel. CF(1) has five subunits: alpha(3), beta(3), gamma(1), delta(1), epsilon(1). CF(0) has three main subunits: a(1), b(2) and c(9-12). The alpha and beta chains form an alternating ring which encloses part of the gamma chain. CF(1) is attached to CF(0) by a central stalk formed by the gamma and epsilon chains, while a peripheral stalk is formed by the delta and b chains.

The protein resides in the cell inner membrane. It carries out the reaction ATP + H2O + 4 H(+)(in) = ADP + phosphate + 5 H(+)(out). In terms of biological role, produces ATP from ADP in the presence of a proton gradient across the membrane. The catalytic sites are hosted primarily by the beta subunits. This Thermotoga neapolitana (strain ATCC 49049 / DSM 4359 / NBRC 107923 / NS-E) protein is ATP synthase subunit beta.